A 228-amino-acid polypeptide reads, in one-letter code: Uracil-DNA glycosylase (228 aa).

Asp65 functions as the Proton acceptor in the catalytic mechanism.

It belongs to the uracil-DNA glycosylase (UDG) superfamily. UNG family.

It is found in the cytoplasm. It carries out the reaction Hydrolyzes single-stranded DNA or mismatched double-stranded DNA and polynucleotides, releasing free uracil.. In terms of biological role, excises uracil residues from the DNA which can arise as a result of misincorporation of dUMP residues by DNA polymerase or due to deamination of cytosine. The chain is Uracil-DNA glycosylase from Lacticaseibacillus paracasei (strain ATCC 334 / BCRC 17002 / CCUG 31169 / CIP 107868 / KCTC 3260 / NRRL B-441) (Lactobacillus paracasei).